The primary structure comprises 269 residues: Ribonuclease HII (269 aa).

In terms of domain architecture, RNase H type-2 spans 83–269; sequence YLIAGVDEVG…HRMSFLTNIL (187 aa). A divalent metal cation is bound by residues aspartate 89, glutamate 90, and aspartate 185.

Belongs to the RNase HII family. Mn(2+) is required as a cofactor. Mg(2+) serves as cofactor.

The protein resides in the cytoplasm. It carries out the reaction Endonucleolytic cleavage to 5'-phosphomonoester.. Endonuclease that specifically degrades the RNA of RNA-DNA hybrids. This chain is Ribonuclease HII, found in Clostridium botulinum (strain Loch Maree / Type A3).